The following is a 371-amino-acid chain: MVATIDSIEMPALPTAVEAHPMKGGDDSHSYSQNSCYQKGVIDAAKAVIVEAVNEKLDLENNPIFDPIKPFRIADFGCSTGPNTFHAMQNIVESVETKYKSLQKTPEFHVFFNDHVNNDFNVLFRSLPPNREFFAAGVPGSFYTRVFPKNSIHFAHCSYALHWLSKVPKEIQDKNSLAYNKGRIHYTGTEKHVVKAYFGQFQRDFEGFLKARAQEIVVGGLMVIQIPGLPSGEVLFSRTGAGLLHFLLGTSLMELVNKGIINEESVDSFNLPQYHPSVEDLEMVIEMNDCFTIERVGTLPHPMKNLPFDVQRTSLQVRAIMECILTEHFGENILDPLFEIYTKNLQENFHVFDKEIRKDADLYLVLKRKGN.

Tyr31 contributes to the S-adenosyl-L-homocysteine binding site. Residues Tyr37 and Gln38 each contribute to the loganate site. S-adenosyl-L-homocysteine contacts are provided by Cys78, Asn83, Asp114, His115, Ser141, and Phe142. His162 and Trp163 together coordinate loganate. Asn180 provides a ligand contact to Mg(2+). Loganate is bound by residues Ala241 and His245. 3 residues coordinate Mg(2+): Asp267, Phe269, and Asn270. The loganate site is built by Gln273 and Gln316.

The protein belongs to the methyltransferase superfamily. Type-7 methyltransferase family. In terms of assembly, homodimer. Mg(2+) serves as cofactor. In terms of tissue distribution, expressed in leaves (especially in leaf epidermis), flowers, siliques and stems, and, at low levels, in hairy roots.

The enzyme catalyses loganate + S-adenosyl-L-methionine = loganin + S-adenosyl-L-homocysteine. The protein operates within alkaloid biosynthesis. Strongly repressed by loganin and slightly by S-adenosyl-L-homocysteine. In terms of biological role, component of the seco-iridoid and derivatives monoterpenoid indole alkaloids (MIAs, e.g. vinblastine and ajmalicine) biosynthesis pathway. Catalyzes the methylation of loganic acid (6S,7R) to produce loganin. Weak activity with secologanic acid as substrate. Inactive on deoxyloganic, dehydrologanic, epiloganic and loganetic acid. This chain is Loganic acid O-methyltransferase, found in Catharanthus roseus (Madagascar periwinkle).